The primary structure comprises 381 residues: Succinyl-diaminopimelate desuccinylase (381 aa).

His-69 lines the Zn(2+) pocket. Asp-71 is an active-site residue. Asp-103 contacts Zn(2+). The active-site Proton acceptor is Glu-137. Zn(2+)-binding residues include Glu-138, Glu-166, and His-355.

Belongs to the peptidase M20A family. DapE subfamily. As to quaternary structure, homodimer. Zn(2+) is required as a cofactor. The cofactor is Co(2+).

It carries out the reaction N-succinyl-(2S,6S)-2,6-diaminopimelate + H2O = (2S,6S)-2,6-diaminopimelate + succinate. Its pathway is amino-acid biosynthesis; L-lysine biosynthesis via DAP pathway; LL-2,6-diaminopimelate from (S)-tetrahydrodipicolinate (succinylase route): step 3/3. In terms of biological role, catalyzes the hydrolysis of N-succinyl-L,L-diaminopimelic acid (SDAP), forming succinate and LL-2,6-diaminopimelate (DAP), an intermediate involved in the bacterial biosynthesis of lysine and meso-diaminopimelic acid, an essential component of bacterial cell walls. The polypeptide is Succinyl-diaminopimelate desuccinylase (Rickettsia felis (strain ATCC VR-1525 / URRWXCal2) (Rickettsia azadi)).